Reading from the N-terminus, the 270-residue chain is 27 kDa core protein (270 aa).

This sequence belongs to the chordopoxvirinae D3 family.

The protein resides in the virion. Late protein which is part of a large complex required for early virion morphogenesis. This complex participates in the formation of virosomes and the incorporation of virosomal contents into nascent immature virions. The protein is 27 kDa core protein of Vertebrata (FPV).